A 205-amino-acid chain; its full sequence is Small ribosomal subunit protein uS4 (205 aa).

The S4 RNA-binding domain maps to 91–149 (MRLDALVLRAAFARSISQARQLVVHRHILVDGKLVDRPSYSVSPGQTVKVKPKSVPLDP).

The protein belongs to the universal ribosomal protein uS4 family. As to quaternary structure, part of the 30S ribosomal subunit. Contacts protein S5. The interaction surface between S4 and S5 is involved in control of translational fidelity.

Its function is as follows. One of the primary rRNA binding proteins, it binds directly to 16S rRNA where it nucleates assembly of the body of the 30S subunit. Functionally, with S5 and S12 plays an important role in translational accuracy. This chain is Small ribosomal subunit protein uS4, found in Tropheryma whipplei (strain TW08/27) (Whipple's bacillus).